The chain runs to 555 residues: MTNPTNCPIWHDLSAHYQEVLPLQMRDMFTKDGRRFEKFSLEAEGLLLDYSKHRITDETLPLLFKLARDSKVEEWRDRMFAGEKINFTENRAVLHTALRNRSNTPVYVDGKDVMPDVNRVLAQMRKFSTSIRSGEWKGYSGKRITDVVNIGIGGSDLGPVMVCGALKPYAQAGLNAHFVSNIDGTHLAQTLERCDPETTLFIVASKTFTTQETMTNARSARSWFLQAAKDEAHVAKHFVAISTNADEVGKFGIDAANMFEFWDWVGGRYSLWSAIGLSIAIYIGMDHFEELLQGGYEIDRHFKNAPLEQNIPVIMALLGIWYNNFFGADSLAILPYDQGLARFPAYLQQADMESNGKFVARDGRIVQCTTGPIIWGEAGTNGQHAFYQLIHQGNRLIPCDFMMPLQSHYSMGKNGNEHHLILLANCFAQTSALMQGKTLDEAKAELVAQGLTGEALETLLPHKVFEGNRPSTTILFDKLTPKTLGKLIAIYEHKIFVQGIIWNINSFDQWGVEYGKQIAKKILPQLSEDQASTEYDSSTNGLMNYFKSRTQSSGT.

Glu-353 (proton donor) is an active-site residue. Active-site residues include His-384 and Lys-516.

This sequence belongs to the GPI family.

The protein localises to the cytoplasm. The enzyme catalyses alpha-D-glucose 6-phosphate = beta-D-fructose 6-phosphate. The protein operates within carbohydrate biosynthesis; gluconeogenesis. Its pathway is carbohydrate degradation; glycolysis; D-glyceraldehyde 3-phosphate and glycerone phosphate from D-glucose: step 2/4. Catalyzes the reversible isomerization of glucose-6-phosphate to fructose-6-phosphate. This chain is Glucose-6-phosphate isomerase, found in Methylobacillus flagellatus (strain ATCC 51484 / DSM 6875 / VKM B-1610 / KT).